The following is a 36-amino-acid chain: APSEPHHPGDQATPDQLAQYYSDLYQYITFITRPRF.

Residue F36 is modified to Phenylalanine amide.

It belongs to the NPY family.

The protein localises to the secreted. Hormone secreted by pancreatic cells that acts as a regulator of pancreatic and gastrointestinal functions. This is Pancreatic polypeptide (ppy) from Aquarana catesbeiana (American bullfrog).